The primary structure comprises 376 residues: Pre-mRNA-splicing factor cwf25 (376 aa).

A coiled-coil region spans residues 25–60; the sequence is KDEQAHKEEMKRVEQLRREIEEERQLLELHRLQEAA. 2 disordered regions span residues 153–211 and 258–289; these read LMEK…DRNN and RTSR…ITQR. Residues 154–167 show a composition bias toward basic and acidic residues; sequence MEKRKYSLDSDRKS. Residues 168-178 show a composition bias toward basic residues; it reads KERRHRDRHHR. Basic and acidic residues predominate over residues 179 to 199; the sequence is SNQDRSRERSDNEQHSSDKRE. Phosphoserine occurs at positions 266 and 268. A coiled-coil region spans residues 286–334; that stretch reads ITQRHTDIESRLQKMQDNAKELDESRRKKIELLEKKERDEEQFLEKERR.

It belongs to the CWC25 family. As to quaternary structure, belongs to the 40S cdc5-associated complex (or cwf complex), a spliceosome sub-complex reminiscent of a late-stage spliceosome composed of the U2, U5 and U6 snRNAs and at least brr2, cdc5, cwf2/prp3, cwf3/syf1, cwf4/syf3, cwf5/ecm2, spp42/cwf6, cwf7/spf27, cwf8, cwf9, cwf10, cwf11, cwf12, prp45/cwf13, cwf14, cwf15, cwf16, cwf17, cwf18, cwf19, cwf20, cwf21, cwf22, cwf23, cwf24, cwf25, cwf26, cyp7/cwf27, cwf28, cwf29/ist3, lea1, msl1, prp5/cwf1, prp10, prp12/sap130, prp17, prp22, sap61, sap62, sap114, sap145, slu7, smb1, smd1, smd3, smf1, smg1 and syf2.

Its subcellular location is the nucleus. Functionally, involved in mRNA splicing. The protein is Pre-mRNA-splicing factor cwf25 (cwf25) of Schizosaccharomyces pombe (strain 972 / ATCC 24843) (Fission yeast).